We begin with the raw amino-acid sequence, 97 residues long: Small ribosomal subunit protein bS6 (97 aa).

Belongs to the bacterial ribosomal protein bS6 family.

Functionally, binds together with bS18 to 16S ribosomal RNA. The chain is Small ribosomal subunit protein bS6 from Listeria monocytogenes serotype 4b (strain CLIP80459).